The following is a 245-amino-acid chain: 7-cyano-7-deazaguanine synthase (245 aa).

19–29 serves as a coordination point for ATP; the sequence is FSGGQDSATCL. Zn(2+)-binding residues include Cys-207, Cys-222, Cys-225, and Cys-228.

This sequence belongs to the QueC family. Requires Zn(2+) as cofactor.

The enzyme catalyses 7-carboxy-7-deazaguanine + NH4(+) + ATP = 7-cyano-7-deazaguanine + ADP + phosphate + H2O + H(+). The protein operates within purine metabolism; 7-cyano-7-deazaguanine biosynthesis. Its function is as follows. Catalyzes the ATP-dependent conversion of 7-carboxy-7-deazaguanine (CDG) to 7-cyano-7-deazaguanine (preQ(0)). The sequence is that of 7-cyano-7-deazaguanine synthase from Gluconacetobacter diazotrophicus (strain ATCC 49037 / DSM 5601 / CCUG 37298 / CIP 103539 / LMG 7603 / PAl5).